A 326-amino-acid polypeptide reads, in one-letter code: Undecaprenyl-diphosphatase (326 aa).

A run of 9 helical transmembrane segments spans residues 11–31 (AFSL…IAVA), 42–62 (TGVI…LGFI), 90–110 (GVAF…WYFW), 138–158 (LGIG…KLLV), 165–185 (FFRS…LLAL), 212–232 (ALAL…GLFI), 242–262 (FSFL…LKGL), 272–292 (ILPL…AIAW), and 304–324 (IFVW…GMGF).

Belongs to the UppP family.

The protein localises to the cell inner membrane. It catalyses the reaction di-trans,octa-cis-undecaprenyl diphosphate + H2O = di-trans,octa-cis-undecaprenyl phosphate + phosphate + H(+). Its function is as follows. Catalyzes the dephosphorylation of undecaprenyl diphosphate (UPP). Confers resistance to bacitracin. The polypeptide is Undecaprenyl-diphosphatase (Synechocystis sp. (strain ATCC 27184 / PCC 6803 / Kazusa)).